The sequence spans 100 residues: Urease subunit gamma (100 aa).

The protein belongs to the urease gamma subunit family. In terms of assembly, heterotrimer of UreA (gamma), UreB (beta) and UreC (alpha) subunits. Three heterotrimers associate to form the active enzyme.

The protein resides in the cytoplasm. It catalyses the reaction urea + 2 H2O + H(+) = hydrogencarbonate + 2 NH4(+). It functions in the pathway nitrogen metabolism; urea degradation; CO(2) and NH(3) from urea (urease route): step 1/1. The polypeptide is Urease subunit gamma (Tolumonas auensis (strain DSM 9187 / NBRC 110442 / TA 4)).